The sequence spans 131 residues: Small ribosomal subunit protein bS6 (131 aa).

The tract at residues 98–131 (EASPMVKAKDERRERRDDFANETADDSDAGDSEE) is disordered. Basic and acidic residues predominate over residues 104–116 (KAKDERRERRDDF). A compositionally biased stretch (acidic residues) spans 120-131 (TADDSDAGDSEE).

This sequence belongs to the bacterial ribosomal protein bS6 family.

Binds together with bS18 to 16S ribosomal RNA. This chain is Small ribosomal subunit protein bS6, found in Enterobacter sp. (strain 638).